The chain runs to 417 residues: UDP-N-acetylglucosamine 1-carboxyvinyltransferase (417 aa).

22 to 23 (KN) provides a ligand contact to phosphoenolpyruvate. Arginine 92 lines the UDP-N-acetyl-alpha-D-glucosamine pocket. Cysteine 116 (proton donor) is an active-site residue. Cysteine 116 bears the 2-(S-cysteinyl)pyruvic acid O-phosphothioketal mark. UDP-N-acetyl-alpha-D-glucosamine is bound by residues aspartate 304 and isoleucine 326.

The protein belongs to the EPSP synthase family. MurA subfamily.

It localises to the cytoplasm. The catalysed reaction is phosphoenolpyruvate + UDP-N-acetyl-alpha-D-glucosamine = UDP-N-acetyl-3-O-(1-carboxyvinyl)-alpha-D-glucosamine + phosphate. Its pathway is cell wall biogenesis; peptidoglycan biosynthesis. Functionally, cell wall formation. Adds enolpyruvyl to UDP-N-acetylglucosamine. The chain is UDP-N-acetylglucosamine 1-carboxyvinyltransferase from Geobacter sulfurreducens (strain ATCC 51573 / DSM 12127 / PCA).